The following is a 460-amino-acid chain: V-type ATP synthase beta chain (460 aa).

The protein belongs to the ATPase alpha/beta chains family.

In terms of biological role, produces ATP from ADP in the presence of a proton gradient across the membrane. The V-type beta chain is a regulatory subunit. The polypeptide is V-type ATP synthase beta chain (Anaeromyxobacter sp. (strain Fw109-5)).